The chain runs to 278 residues: NADPH-dependent 7-cyano-7-deazaguanine reductase (278 aa).

87-89 (IES) provides a ligand contact to substrate. An NADPH-binding site is contributed by 89–90 (SK). Cys-185 serves as the catalytic Thioimide intermediate. Asp-192 functions as the Proton donor in the catalytic mechanism. Position 224–225 (224–225 (HE)) interacts with substrate. 253-254 (RG) is an NADPH binding site. A disordered region spans residues 255 to 278 (GLDINPYRSTNPTFSVQNHRSFRQ). Residues 261 to 278 (YRSTNPTFSVQNHRSFRQ) are compositionally biased toward polar residues.

This sequence belongs to the GTP cyclohydrolase I family. QueF type 2 subfamily. As to quaternary structure, homodimer.

The protein resides in the cytoplasm. The catalysed reaction is 7-aminomethyl-7-carbaguanine + 2 NADP(+) = 7-cyano-7-deazaguanine + 2 NADPH + 3 H(+). It participates in tRNA modification; tRNA-queuosine biosynthesis. Its function is as follows. Catalyzes the NADPH-dependent reduction of 7-cyano-7-deazaguanine (preQ0) to 7-aminomethyl-7-deazaguanine (preQ1). This is NADPH-dependent 7-cyano-7-deazaguanine reductase from Coxiella burnetii (strain Dugway 5J108-111).